The chain runs to 1054 residues: DIS3-like exonuclease 1 (1054 aa).

Residues 236–313 form the CSD1 domain; sequence AGIKSGRYIQ…WKGRTAALCE (78 aa). Positions 313–332 are disordered; the sequence is ENDSEDKASGESPSEPMPTG. Positions 365–431 constitute a CSD2 domain; it reads ILVTPWDYRI…GEIATILVEN (67 aa). In terms of domain architecture, RNB spans 465–816; the sequence is RRDLRSTHLV…VHRLLMAAIS (352 aa). Ser-989 bears the Phosphoserine mark.

Belongs to the RNR ribonuclease family. In terms of assembly, component of the RNA exosome complex. The catalytically inactive RNA exosome core (Exo-9) complex is believed to associate with catalytic subunits EXOSC10, and DIS3 or DIS3L in cytoplasmic- and nuclear-specific RNA exosome complex forms. The cofactor is Mg(2+).

It is found in the cytoplasm. The enzyme catalyses Exonucleolytic cleavage in the 3'- to 5'-direction to yield nucleoside 5'-phosphates.. Its function is as follows. Catalytic component of the RNA exosome complex which has 3'-&gt;5' exoribonuclease activity and participates in a multitude of cellular RNA processing and degradation events. In the cytoplasm, the RNA exosome complex is involved in general mRNA turnover and specifically degrades inherently unstable mRNAs containing AU-rich elements (AREs) within their 3' untranslated regions, and in RNA surveillance pathways, preventing translation of aberrant mRNAs. It seems to be involved in degradation of histone mRNA. This is DIS3-like exonuclease 1 (Dis3l) from Rattus norvegicus (Rat).